We begin with the raw amino-acid sequence, 375 residues long: Histidine biosynthesis bifunctional protein HisB (375 aa).

Positions 1–168 are histidinol-phosphatase; it reads MTPILFVDRD…GIAHELADAP (168 aa). D8 (nucleophile) is an active-site residue. Mg(2+)-binding residues include D8, D10, and D128. The active-site Proton donor is the D10. Residues 169–375 form an imidazoleglycerol-phosphate dehydratase region; the sequence is RRAVVQRNTK…SALPTTKGAL (207 aa).

This sequence in the N-terminal section; belongs to the histidinol-phosphatase family. The protein in the C-terminal section; belongs to the imidazoleglycerol-phosphate dehydratase family. Requires Mg(2+) as cofactor.

It is found in the cytoplasm. The catalysed reaction is D-erythro-1-(imidazol-4-yl)glycerol 3-phosphate = 3-(imidazol-4-yl)-2-oxopropyl phosphate + H2O. It catalyses the reaction L-histidinol phosphate + H2O = L-histidinol + phosphate. Its pathway is amino-acid biosynthesis; L-histidine biosynthesis; L-histidine from 5-phospho-alpha-D-ribose 1-diphosphate: step 6/9. The protein operates within amino-acid biosynthesis; L-histidine biosynthesis; L-histidine from 5-phospho-alpha-D-ribose 1-diphosphate: step 8/9. This chain is Histidine biosynthesis bifunctional protein HisB, found in Xanthomonas oryzae pv. oryzae (strain MAFF 311018).